The chain runs to 308 residues: Cytochrome c biogenesis protein CcsA (308 aa).

A run of 7 helical transmembrane segments spans residues 2-22, 44-64, 71-91, 143-163, 212-232, 239-259, and 273-293; these read IVST…SILI, GMLV…IYLG, LSES…IAYF, MILG…LMVI, VIGL…VWAN, WSWD…AIYL, and AIVA…VNLV.

This sequence belongs to the CcmF/CycK/Ccl1/NrfE/CcsA family. In terms of assembly, may interact with Ccs1.

It localises to the plastid membrane. Its function is as follows. Required during biogenesis of c-type cytochromes (cytochrome c6 and cytochrome f) at the step of heme attachment. This Cuscuta exaltata (Tall dodder) protein is Cytochrome c biogenesis protein CcsA.